The sequence spans 618 residues: UvrABC system protein C (618 aa).

A GIY-YIG domain is found at 13 to 92 (DKPGVYLMKN…IKKYRPKYNI (80 aa)). In terms of domain architecture, UVR spans 204–239 (LDIVENFKLNMEKAAENLEFEKAAMLRDKINIIEKI).

The protein belongs to the UvrC family. In terms of assembly, interacts with UvrB in an incision complex.

Its subcellular location is the cytoplasm. In terms of biological role, the UvrABC repair system catalyzes the recognition and processing of DNA lesions. UvrC both incises the 5' and 3' sides of the lesion. The N-terminal half is responsible for the 3' incision and the C-terminal half is responsible for the 5' incision. The sequence is that of UvrABC system protein C from Clostridium botulinum (strain Okra / Type B1).